A 1056-amino-acid polypeptide reads, in one-letter code: MSEPAPEVPEELFREVKYYAVGDIDPQVIQLLKAGKAKEVSYNALASHIISEDGDNPEVGEAREVFDLPVVKPSWVTLSVQCGALLPVNGFSPESCQIFFGLTACLSQVSSEDRSALWALVTFHGGSCQLNLNKKCTHLIVPEPKGEKYERAVKRTSIKIVTPDWVLDCVSEKRRKDEAFYHPRLIIYEEEEEEEEEGDNEEQDSQNEGSTEKSSVASSAVASPAEQPCSPKPRAEVSKGELMFDDSSDSSPEKQERSLNWAPAEAPPLNTAQRRLPQGKGPGLINLCANVPPVPGDILPPDMRGNLMAPGQNLQNSERSEILGTWSPAVRTLRNITNNADIQQINRPSNVAHILQSLSAPTKSLEQQVARGQQGHPNASAVLFGQAKGAPETHVLQQHHPPQQPQQQHPALHLQPQIMQLQQQQQQQQQQQQQPQPYPQPPSHQFPQQVHQHQFSQQQLQFPQQPLHPQQQLHRPQQQLQPFQQQHALQQQLHQLQQQQLQHHQLAQLQQQQQQQHNLLQQQQQQQQLQRLQQQQQMQNQAAHLSQASQALQHQVLPQQPLQLSLQPPPQQQQQQQLFGHDPAVEIPEESFLLGCVFAIADYPEQMSDKQLLATWKRIIQAHGGTVDPTFTSRCTHLLCASQVSSMYTQALRERKRCVTAHWLNTVLKKKKLMPPHRALHFPVAFPPGGKPCSQHIISVTGFVDNDRDDLKLMAYLAGAKYTGYLCRSNTVLICKEPSGLKYEKAKEWRIPCVNAQWLGDILLGNFEALRQVQYSRYTAFNMPDPFVPTPHLVLGLLDAWRTPVKVTAELLMGVRLPPKLKPNEVANIQPSSKRARIEDLPPPTKKLTPELTPLVLFTGFEPVQVQQYIKKLYILGGEVAECTKKCTHLIASKVTRTVKFLTAISVVKHIVTPDWLEECFKRQTFIDEQNYILRDAEAEVLFSFSLEESLKRAHVSPLFKTKYFYITPGICPSLATMKAIVECAGGKVLAKQPSFRKLMEHKQNKSLSEIILISCENDLHLCREYFARGIDVHNAEFVLTGVLTQTLDYESYKFN.

2 BRCT domains span residues 8-93 and 94-183; these read VPEE…GFSP and ESCQ…FYHP. An interaction with PAGR1 region spans residues 94 to 183; the sequence is ESCQIFFGLT…RRKDEAFYHP (90 aa). Over residues 188–205 the composition is skewed to acidic residues; that stretch reads YEEEEEEEEEGDNEEQDS. Disordered regions lie at residues 188 to 276, 393 to 412, and 419 to 486; these read YEEE…QRRL, THVL…HPAL, and MQLQ…FQQQ. Residues 214-223 are compositionally biased toward low complexity; it reads SSVASSAVAS. 2 positions are modified to phosphoserine: serine 223 and serine 230. Low complexity-rich tracts occupy residues 396-412, 419-435, and 445-486; these read LQQH…HPAL, MQLQ…QQQP, and QFPQ…FQQQ. The interval 577–1056 is interaction with TP53BP1; sequence QLFGHDPAVE…TLDYESYKFN (480 aa). 4 consecutive BRCT domains span residues 588–681, 688–776, 853–934, and 955–989; these read PEES…RALH, PGGK…VQYS, TPLV…NYIL, and HVSP…GGKV. The Nuclear localization signal signature appears at 655-672; it reads RKRCVTAHWLNTVLKKKK.

In terms of assembly, interacts with the C-terminal transactivation domain of PAX2. Forms a constitutive complex with PAGR1 independently of the MLL2/MLL3 complex. Interacts with TP53BP1 (when phosphorylated at the N-terminus by ATM). Interacts with HLTF. Component of the KMT2 family MLL2/MLL3 complex (also named ASCOM complex), at least composed of the HMTs KMT2D and/or KMT2C, the common subunits ASH2L, RBBP5, WDR5 and DPY30, and the complex type-specific subunits PAXIP1/PTIP, PAGR1, NCOA6 and KDM6A; required for the association of PAGR1 with the MLL2/MLL3 complex. Interacts with NUPR1; this interaction prevents PAXIP1 inhibition of PAX2 transcription factor activity. In terms of tissue distribution, expression detected in all tissues examined, including brain stem, cerebellum, cortex, heart, spleen, kidney, liver, thymus and lung.

The protein resides in the nucleus matrix. The protein localises to the chromosome. Functionally, involved in DNA damage response and in transcriptional regulation through histone methyltransferase (HMT) complexes such as the MLL2/MLL3 complex. Plays a role in early development. In DNA damage response is required for cell survival after ionizing radiation. In vitro shown to be involved in the homologous recombination mechanism for the repair of double-strand breaks (DSBs). Its localization to DNA damage foci requires Rnf8 and Ube2n. Recruits Tp53bp1 to DNA damage foci and, at least in particular repair processes, effective DNA damage response appears to require the association with Tp53bp1 phosphorylated by Atm. Together with Tp53bp1 regulates Atm association. Proposed to recruit Pagr1 to sites of DNA damage and the Pagr1:Paxip1 complex is required for cell survival in response to DNA damage independently of the MLL2/MLL3 complex. However, this function has been questioned. Promotes ubiquitination of PCNA following UV irradiation and may regulate recruitment of polymerase eta and Rad51 to chromatin after DNA damage. Proposed to be involved in transcriptional regulation by linking MLL-containing histone methyltransferase (HMT) complexes to gene promoters by interacting with promoter-bound transcription factors such as Pax2. Associates with gene promoters that are known to be regulated by Kmt2d/Mll2. During immunoglobulin class switching in activated B-cells is involved in trimethylation of histone H3 at 'Lys-4' and in transcription initiation of downstream switch regions at the immunoglobulin heavy-chain (Igh) locus; this function appears to involve the recruitment of MLL-containing HMT complexes. Conflictingly, its function in transcriptional regulation during immunoglobulin class switching is reported to be independent of the MLL2/MLL3 complex. The polypeptide is PAX-interacting protein 1 (Paxip1) (Mus musculus (Mouse)).